A 100-amino-acid polypeptide reads, in one-letter code: Probable DNA-binding protein HU (100 aa).

It belongs to the bacterial histone-like protein family.

In terms of biological role, histone-like DNA-binding protein which is capable of wrapping DNA to stabilize it, and thus to prevent its denaturation under extreme environmental conditions. This Chlamydia muridarum (strain MoPn / Nigg) protein is Probable DNA-binding protein HU (hup).